The primary structure comprises 142 residues: Large ribosomal subunit protein uL22c (142 aa).

The protein belongs to the universal ribosomal protein uL22 family. Part of the 50S ribosomal subunit.

It is found in the plastid. Its subcellular location is the chloroplast. Its function is as follows. This protein binds specifically to 23S rRNA. Functionally, the globular domain of the protein is located near the polypeptide exit tunnel on the outside of the subunit, while an extended beta-hairpin is found that lines the wall of the exit tunnel in the center of the 70S ribosome. The polypeptide is Large ribosomal subunit protein uL22c (rpl22) (Carica papaya (Papaya)).